A 537-amino-acid polypeptide reads, in one-letter code: Oocyte zinc finger protein XlCOF29 (537 aa).

A disordered region spans residues 1–21 (MGMSEKASDTGMKGKKKDKNE). 6 C2H2-type zinc fingers span residues 375-397 (FTCS…LKSH), 403-425 (FSCS…RRLH), 431-453 (FPCA…SKTH), 459-481 (YSCT…KKRH), 487-509 (YTCS…VRIH), and 515-537 (FSCS…ERMH).

Belongs to the krueppel C2H2-type zinc-finger protein family.

It is found in the nucleus. Functionally, may be involved in transcriptional regulation. In Xenopus laevis (African clawed frog), this protein is Oocyte zinc finger protein XlCOF29.